The sequence spans 398 residues: Exodeoxyribonuclease 7 large subunit (398 aa).

Belongs to the XseA family. Heterooligomer composed of large and small subunits.

It localises to the cytoplasm. The enzyme catalyses Exonucleolytic cleavage in either 5'- to 3'- or 3'- to 5'-direction to yield nucleoside 5'-phosphates.. Bidirectionally degrades single-stranded DNA into large acid-insoluble oligonucleotides, which are then degraded further into small acid-soluble oligonucleotides. In Chlorobaculum tepidum (strain ATCC 49652 / DSM 12025 / NBRC 103806 / TLS) (Chlorobium tepidum), this protein is Exodeoxyribonuclease 7 large subunit.